The sequence spans 317 residues: Actin-related protein 2/3 complex subunit 2 (317 aa).

Belongs to the ARPC2 family. Component of the Arp2/3 complex composed of arp2, act2, arc1/p41-ARC, arc2/p34-ARC, arc3/p21-ARC, arc4/p20-ARC and arc5/p16-ARC.

Its subcellular location is the cytoplasm. The protein localises to the cytoskeleton. The protein resides in the actin patch. In terms of biological role, functions as actin-binding component of the Arp2/3 complex which is involved in regulation of actin polymerization and together with an activating nucleation-promoting factor (NPF) mediates the formation of branched actin networks. Seems to contact the mother actin filament. This is Actin-related protein 2/3 complex subunit 2 (arc2) from Schizosaccharomyces pombe (strain 972 / ATCC 24843) (Fission yeast).